We begin with the raw amino-acid sequence, 704 residues long: Ion-translocating oxidoreductase complex subunit C (704 aa).

4Fe-4S ferredoxin-type domains are found at residues Met-368–Tyr-397 and Lys-407–Phe-436. Residues Cys-377, Cys-380, Cys-383, Cys-387, Cys-416, Cys-419, Cys-422, and Cys-426 each contribute to the [4Fe-4S] cluster site. The tract at residues Arg-536–Ala-684 is disordered. Low complexity predominate over residues Lys-556–Arg-565.

It belongs to the 4Fe4S bacterial-type ferredoxin family. RnfC subfamily. The complex is composed of six subunits: RsxA, RsxB, RsxC, RsxD, RsxE and RsxG. [4Fe-4S] cluster serves as cofactor.

It localises to the cell inner membrane. Its function is as follows. Part of a membrane-bound complex that couples electron transfer with translocation of ions across the membrane. Required to maintain the reduced state of SoxR. This chain is Ion-translocating oxidoreductase complex subunit C, found in Salmonella choleraesuis (strain SC-B67).